A 457-amino-acid polypeptide reads, in one-letter code: Histidine--tRNA ligase (457 aa).

The protein belongs to the class-II aminoacyl-tRNA synthetase family. In terms of assembly, homodimer.

Its subcellular location is the cytoplasm. The enzyme catalyses tRNA(His) + L-histidine + ATP = L-histidyl-tRNA(His) + AMP + diphosphate + H(+). In Mesoplasma florum (strain ATCC 33453 / NBRC 100688 / NCTC 11704 / L1) (Acholeplasma florum), this protein is Histidine--tRNA ligase.